The primary structure comprises 449 residues: Tubulin alpha-1C chain (449 aa).

An MREC motif motif is present at residues 1 to 4 (MREC). Gln-11 provides a ligand contact to GTP. Position 40 is an N6-acetyllysine (Lys-40). Positions 71, 140, 144, 145, 179, 206, and 228 each coordinate GTP. Mg(2+) is bound at residue Glu-71. Residue Glu-254 is part of the active site. Residue Tyr-282 is modified to 3'-nitrotyrosine. A Phosphotyrosine modification is found at Tyr-432. At Ser-439 the chain carries Phosphoserine. Tyr-449 carries the post-translational modification 3'-nitrotyrosine.

The protein belongs to the tubulin family. Dimer of alpha and beta chains. A typical microtubule is a hollow water-filled tube with an outer diameter of 25 nm and an inner diameter of 15 nM. Alpha-beta heterodimers associate head-to-tail to form protofilaments running lengthwise along the microtubule wall with the beta-tubulin subunit facing the microtubule plus end conferring a structural polarity. Microtubules usually have 13 protofilaments but different protofilament numbers can be found in some organisms and specialized cells. The cofactor is Mg(2+). Post-translationally, some glutamate residues at the C-terminus are polyglycylated, resulting in polyglycine chains on the gamma-carboxyl group. Glycylation is mainly limited to tubulin incorporated into axonemes (cilia and flagella) whereas glutamylation is prevalent in neuronal cells, centrioles, axonemes, and the mitotic spindle. Both modifications can coexist on the same protein on adjacent residues, and lowering polyglycylation levels increases polyglutamylation, and reciprocally. Cilia and flagella glycylation is required for their stability and maintenance. Flagella glycylation controls sperm motility. In terms of processing, some glutamate residues at the C-terminus are polyglutamylated, resulting in polyglutamate chains on the gamma-carboxyl group. Polyglutamylation plays a key role in microtubule severing by spastin (SPAST). SPAST preferentially recognizes and acts on microtubules decorated with short polyglutamate tails: severing activity by SPAST increases as the number of glutamates per tubulin rises from one to eight, but decreases beyond this glutamylation threshold. Glutamylation is also involved in cilia motility. Acetylation of alpha chains at Lys-40 is located inside the microtubule lumen. This modification has been correlated with increased microtubule stability, intracellular transport and ciliary assembly. Post-translationally, methylation of alpha chains at Lys-40 is found in mitotic microtubules and is required for normal mitosis and cytokinesis contributing to genomic stability. In terms of processing, nitration of Tyr-449 is irreversible and interferes with normal dynein intracellular distribution. Undergoes a tyrosination/detyrosination cycle, the cyclic removal and re-addition of a C-terminal tyrosine residue by the enzymes tubulin tyrosine carboxypeptidase (MATCAP1, VASH1 or VASH2) and tubulin tyrosine ligase (TTL), respectively. Post-translationally, tyrosination promotes microtubule interaction with CAP-Gly domain-containing proteins such as CLIP1, CLIP2 and DCTN1. Tyrosination regulates the initiation of dynein-dynactin motility via interaction with DCTN1, which brings the dynein-dynactin complex into contact with microtubules. In neurons, tyrosinated tubulins mediate the initiation of retrograde vesicle transport. In terms of processing, detyrosination is involved in metaphase plate congression by guiding chromosomes during mitosis: detyrosination promotes interaction with CENPE, promoting pole-proximal transport of chromosomes toward the equator. Detyrosination increases microtubules-dependent mechanotransduction in dystrophic cardiac and skeletal muscle. In cardiomyocytes, detyrosinated microtubules are required to resist to contractile compression during contraction: detyrosination promotes association with desmin (DES) at force-generating sarcomeres, leading to buckled microtubules and mechanical resistance to contraction. As to expression, minor alpha-tubulin expressed in all tissues.

The protein resides in the cytoplasm. Its subcellular location is the cytoskeleton. It carries out the reaction GTP + H2O = GDP + phosphate + H(+). Tubulin is the major constituent of microtubules, a cylinder consisting of laterally associated linear protofilaments composed of alpha- and beta-tubulin heterodimers. Microtubules grow by the addition of GTP-tubulin dimers to the microtubule end, where a stabilizing cap forms. Below the cap, tubulin dimers are in GDP-bound state, owing to GTPase activity of alpha-tubulin. This is Tubulin alpha-1C chain (Tuba1c) from Mus musculus (Mouse).